The following is a 360-amino-acid chain: Phospho-N-acetylmuramoyl-pentapeptide-transferase (360 aa).

The next 10 helical transmembrane spans lie at 18-38 (VFSY…VFSL), 73-93 (TMGG…WGDL), 97-117 (YVLV…IDDY), 134-154 (YILQ…SSTL), 168-188 (VMPQ…VGAS), 199-219 (GLAI…AYLS), 236-256 (AGEL…FLWF), 263-283 (VFMG…IAVL), 288-308 (ILLV…ILQV), and 338-358 (VIVR…ATLK).

Belongs to the glycosyltransferase 4 family. MraY subfamily. It depends on Mg(2+) as a cofactor.

Its subcellular location is the cell inner membrane. The catalysed reaction is UDP-N-acetyl-alpha-D-muramoyl-L-alanyl-gamma-D-glutamyl-meso-2,6-diaminopimeloyl-D-alanyl-D-alanine + di-trans,octa-cis-undecaprenyl phosphate = di-trans,octa-cis-undecaprenyl diphospho-N-acetyl-alpha-D-muramoyl-L-alanyl-D-glutamyl-meso-2,6-diaminopimeloyl-D-alanyl-D-alanine + UMP. The protein operates within cell wall biogenesis; peptidoglycan biosynthesis. In terms of biological role, catalyzes the initial step of the lipid cycle reactions in the biosynthesis of the cell wall peptidoglycan: transfers peptidoglycan precursor phospho-MurNAc-pentapeptide from UDP-MurNAc-pentapeptide onto the lipid carrier undecaprenyl phosphate, yielding undecaprenyl-pyrophosphoryl-MurNAc-pentapeptide, known as lipid I. This is Phospho-N-acetylmuramoyl-pentapeptide-transferase from Shewanella denitrificans (strain OS217 / ATCC BAA-1090 / DSM 15013).